The following is a 152-amino-acid chain: MIKERTFLAIKPDGVQRGYVSDIIGRFEKKGFKLVGLKQLIPTKQLAQDHYGVHRERPFFKDLVEFISSGPVVAMIWEGEGVILSARKLIGATKPLEAEPGTIRGDLAIDIGRNIIHGSDGEETAKFEINLWFNQDEICDWETSDSEWRAEN.

Residues K11, F59, R87, T93, R104, and N114 each contribute to the ATP site. H117 (pros-phosphohistidine intermediate) is an active-site residue.

Belongs to the NDK family. Homotetramer. Mg(2+) serves as cofactor.

It localises to the cytoplasm. It carries out the reaction a 2'-deoxyribonucleoside 5'-diphosphate + ATP = a 2'-deoxyribonucleoside 5'-triphosphate + ADP. It catalyses the reaction a ribonucleoside 5'-diphosphate + ATP = a ribonucleoside 5'-triphosphate + ADP. Functionally, major role in the synthesis of nucleoside triphosphates other than ATP. The ATP gamma phosphate is transferred to the NDP beta phosphate via a ping-pong mechanism, using a phosphorylated active-site intermediate. This Prochlorococcus marinus subsp. pastoris (strain CCMP1986 / NIES-2087 / MED4) protein is Nucleoside diphosphate kinase.